Here is a 685-residue protein sequence, read N- to C-terminus: Serotransferrin (685 aa).

The first 16 residues, 1–16 (MKPLLLLPLLGCLATI), serve as a signal peptide directing secretion. Transferrin-like domains follow at residues 23–329 (VKWC…ALKI) and 340–666 (MKWC…SLRT). A disulfide bridge links C26 with C48. D72 and Y102 together coordinate Fe(3+). 3 cysteine pairs are disulfide-bonded: C125–C206, C170–C184, and C234–C248. Hydrogencarbonate contacts are provided by T127, K131, A133, and G134. Y200 lines the Fe(3+) pocket. Position 256 (H256) interacts with Fe(3+). Intrachain disulfides connect C343-C379 and C353-C370. D394 and Y428 together coordinate Fe(3+). 7 disulfide bridges follow: C404/C678, C419/C639, C451/C526, C475/C667, C485/C499, C496/C509, and C566/C580. T453, R457, A459, and G460 together coordinate hydrogencarbonate. N476 is a glycosylation site (N-linked (GlcNAc...) asparagine). Y520 is a Fe(3+) binding site. H588 contributes to the Fe(3+) binding site.

This sequence belongs to the transferrin family. In terms of assembly, monomer.

The protein localises to the secreted. In terms of biological role, transferrins are iron binding transport proteins which can bind two Fe(3+) ions in association with the binding of an anion, usually bicarbonate. This is Serotransferrin (tf) from Paralichthys olivaceus (Bastard halibut).